Reading from the N-terminus, the 224-residue chain is Large ribosomal subunit protein uL1m (224 aa).

Belongs to the universal ribosomal protein uL1 family.

Its subcellular location is the mitochondrion. This chain is Large ribosomal subunit protein uL1m (RPL1), found in Reclinomonas americana.